The sequence spans 191 residues: MLKILKESLKTAPIVKRGTYNYFIHPISDGVPVVKPELLRDVIACIVKNADLDVDKIVTIEAMGLPIGASLSQITDIPFIIIRKRKYELPGEIAVHQATGYSKGELYLNGICKGDRVLIVDDVISTGGTLAAVIKALEMAGAEIKDIVVVIQRGNGKKIIEDMGYNVQTLVTIDVDENGVQVLGCIDDECK.

The protein belongs to the purine/pyrimidine phosphoribosyltransferase family. Archaeal HPRT subfamily. In terms of assembly, homodimer.

The protein localises to the cytoplasm. The catalysed reaction is IMP + diphosphate = hypoxanthine + 5-phospho-alpha-D-ribose 1-diphosphate. It carries out the reaction GMP + diphosphate = guanine + 5-phospho-alpha-D-ribose 1-diphosphate. It participates in purine metabolism; IMP biosynthesis via salvage pathway; IMP from hypoxanthine: step 1/1. Catalyzes a salvage reaction resulting in the formation of IMP that is energically less costly than de novo synthesis. This Methanocella arvoryzae (strain DSM 22066 / NBRC 105507 / MRE50) protein is Hypoxanthine/guanine phosphoribosyltransferase.